The sequence spans 719 residues: DNA ligase (719 aa).

Residues 42–46, 92–93, and E126 contribute to the NAD(+) site; these read DAAYD and SL. Catalysis depends on K128, which acts as the N6-AMP-lysine intermediate. Residues R149, E185, K301, and K325 each coordinate NAD(+). Zn(2+) contacts are provided by C430, C433, C448, and C454. In terms of domain architecture, BRCT spans 640–719; sequence ATGSPVEGKT…DDWFKLVGED (80 aa).

Belongs to the NAD-dependent DNA ligase family. LigA subfamily. Mg(2+) is required as a cofactor. It depends on Mn(2+) as a cofactor.

The enzyme catalyses NAD(+) + (deoxyribonucleotide)n-3'-hydroxyl + 5'-phospho-(deoxyribonucleotide)m = (deoxyribonucleotide)n+m + AMP + beta-nicotinamide D-nucleotide.. Its function is as follows. DNA ligase that catalyzes the formation of phosphodiester linkages between 5'-phosphoryl and 3'-hydroxyl groups in double-stranded DNA using NAD as a coenzyme and as the energy source for the reaction. It is essential for DNA replication and repair of damaged DNA. The protein is DNA ligase of Brucella melitensis biotype 2 (strain ATCC 23457).